The chain runs to 937 residues: Periplasmic nitrate reductase (937 aa).

The segment at residues 1 to 42 (MTSKIQGKKPTLSRRDFIKSAAAASAAASVGLSIPSVMSAEA) is a signal peptide (tat-type signal). The 62-residue stretch at 49–110 (WKWDKSVCRF…FCAKIMYGAD (62 aa)) folds into the 4Fe-4S Mo/W bis-MGD-type domain. Positions 56, 59, 63, and 96 each coordinate [4Fe-4S] cluster. Mo-bis(molybdopterin guanine dinucleotide) contacts are provided by residues lysine 98, glutamine 166, asparagine 191, cysteine 195, 228–235 (WGANMAEM), methionine 433, glutamine 437, asparagine 543, 568–569 (SE), lysine 591, aspartate 618, and 827–836 (TGRVLEHWHS). Tryptophan 903 is a substrate binding site. Mo-bis(molybdopterin guanine dinucleotide) is bound by residues asparagine 911 and lysine 928.

The protein belongs to the prokaryotic molybdopterin-containing oxidoreductase family. NasA/NapA/NarB subfamily. As to quaternary structure, component of the periplasmic nitrate reductase NapAB complex composed of NapA and NapB. Requires [4Fe-4S] cluster as cofactor. The cofactor is Mo-bis(molybdopterin guanine dinucleotide). Predicted to be exported by the Tat system. The position of the signal peptide cleavage has not been experimentally proven.

The protein resides in the periplasm. It carries out the reaction 2 Fe(II)-[cytochrome] + nitrate + 2 H(+) = 2 Fe(III)-[cytochrome] + nitrite + H2O. Its function is as follows. Catalytic subunit of the periplasmic nitrate reductase complex NapAB. Receives electrons from NapB and catalyzes the reduction of nitrate to nitrite. In Helicobacter hepaticus (strain ATCC 51449 / 3B1), this protein is Periplasmic nitrate reductase.